Consider the following 731-residue polypeptide: 1,4-alpha-glucan branching enzyme GlgB (731 aa).

Asp412 serves as the catalytic Nucleophile. Glu465 acts as the Proton donor in catalysis.

This sequence belongs to the glycosyl hydrolase 13 family. GlgB subfamily. In terms of assembly, monomer.

It catalyses the reaction Transfers a segment of a (1-&gt;4)-alpha-D-glucan chain to a primary hydroxy group in a similar glucan chain.. It functions in the pathway glycan biosynthesis; glycogen biosynthesis. Its function is as follows. Catalyzes the formation of the alpha-1,6-glucosidic linkages in glycogen by scission of a 1,4-alpha-linked oligosaccharide from growing alpha-1,4-glucan chains and the subsequent attachment of the oligosaccharide to the alpha-1,6 position. The polypeptide is 1,4-alpha-glucan branching enzyme GlgB (Bordetella bronchiseptica (strain ATCC BAA-588 / NCTC 13252 / RB50) (Alcaligenes bronchisepticus)).